The sequence spans 207 residues: Guanylate kinase (207 aa).

Residues 6–185 (GLLIVLSGPS…AKQRIQSIVE (180 aa)) enclose the Guanylate kinase-like domain. ATP is bound at residue 13–20 (GPSGVGKG).

This sequence belongs to the guanylate kinase family.

The protein localises to the cytoplasm. The enzyme catalyses GMP + ATP = GDP + ADP. Essential for recycling GMP and indirectly, cGMP. The sequence is that of Guanylate kinase from Staphylococcus saprophyticus subsp. saprophyticus (strain ATCC 15305 / DSM 20229 / NCIMB 8711 / NCTC 7292 / S-41).